A 398-amino-acid chain; its full sequence is Bifunctional enzyme IspD/IspF (398 aa).

A 2-C-methyl-D-erythritol 4-phosphate cytidylyltransferase region spans residues 1–234; sequence MTNSPRTAAI…SRLMAALGDI (234 aa). Residues 235–398 form a 2-C-methyl-D-erythritol 2,4-cyclodiphosphate synthase region; the sequence is RTGTGYDVHA…LPWGADGLAG (164 aa). A divalent metal cation-binding residues include Asp-241 and His-243. Residues 241 to 243 and 267 to 268 each bind 4-CDP-2-C-methyl-D-erythritol 2-phosphate; these read DVH and HS. Residue His-275 coordinates a divalent metal cation. 4-CDP-2-C-methyl-D-erythritol 2-phosphate-binding positions include 289–291, 365–368, Phe-372, and Arg-375; these read DIG and TTSE.

It in the N-terminal section; belongs to the IspD/TarI cytidylyltransferase family. IspD subfamily. The protein in the C-terminal section; belongs to the IspF family. A divalent metal cation is required as a cofactor.

The enzyme catalyses 2-C-methyl-D-erythritol 4-phosphate + CTP + H(+) = 4-CDP-2-C-methyl-D-erythritol + diphosphate. It carries out the reaction 4-CDP-2-C-methyl-D-erythritol 2-phosphate = 2-C-methyl-D-erythritol 2,4-cyclic diphosphate + CMP. It functions in the pathway isoprenoid biosynthesis; isopentenyl diphosphate biosynthesis via DXP pathway; isopentenyl diphosphate from 1-deoxy-D-xylulose 5-phosphate: step 2/6. It participates in isoprenoid biosynthesis; isopentenyl diphosphate biosynthesis via DXP pathway; isopentenyl diphosphate from 1-deoxy-D-xylulose 5-phosphate: step 4/6. In terms of biological role, bifunctional enzyme that catalyzes the formation of 4-diphosphocytidyl-2-C-methyl-D-erythritol from CTP and 2-C-methyl-D-erythritol 4-phosphate (MEP) (IspD), and catalyzes the conversion of 4-diphosphocytidyl-2-C-methyl-D-erythritol 2-phosphate (CDP-ME2P) to 2-C-methyl-D-erythritol 2,4-cyclodiphosphate (ME-CPP) with a corresponding release of cytidine 5-monophosphate (CMP) (IspF). The protein is Bifunctional enzyme IspD/IspF of Rhodopseudomonas palustris (strain TIE-1).